The chain runs to 1403 residues: MSEVQGTVEFSVELHKFYNVDLFQRGYYQIRVTLKVSSRIPHRLSASIVGQSESSSLHSACVHESAVHSRVFQILYRNEEVSINDAMLFRVHLLLDGERVEDALSEVEFQLKVDLHFTDSEQQLRDVTGTPMISSRTLGLHFHPRRGLHHQVPVMFDYFHLSVISVAIHAALVALQQPLISFTRPGRGSWLGKGGPDTGPEQPTISLENLVFGAGYCKPTSSEGSFYVPSENCIQHAHKWHRDLCLLLLHAYQGLRLYFLVIMRDIPELPTMELEALAVEETLSQLCSELQMLNNPEKIAEQISKDLAWLASHLMALWTQFLDTVTLHSQVTTYLTQEHHTLRVRRFSEAFFYMEHQKLAVLTFQENLIQTHSQLSLDIRNSEYLTSMPPLPAECLDIDGDWNTLPVIFEDRYVDCPVSGHNLSVYPNFDVPVTSPAIMNLKGKEKNLINQNSSSRKDIPLSTTEAPQLGSDEDVTRRPEVQENVSTWNPIDVCSESQVYLTIGEFQNRAGIPEDECWTGPRPDAVKDSLTDTDICSRSPGPDEGQTPALTYIDVQSSNKYCPRAELVQGINVQHEHRSSRESYGIVKTVPSKVVAGTSQNNSTSLNQTAALELRTLGRGVNQDGKPVLLSLKLTPAEPCDPPSTALREALDTKPSQPDHAEEPEDLSALSGVIKRSASIISDSGIESEPSSVAWSEARSRALELPSDRDVLHQVVRRHAHHRNSLEGGHTESNTSLPSGIQASLSSISSLPFEEEERELALNKLTKSVSAPQISSPEESAEGADTIKNTAGFSEDLDPSSKENSPPRHTSLSYGGSRVQDVRAGHSLADIALDSDRPQGPGYMDIPNDKGNHPELQEPCCLDGMAETPLHVETKGLNLKIPCTIVLENSKSRSFHRAAGETAKGKPEELSMSKCVLSNNSISEVRAASHHRVPEISCSPAVEAVNLNSTGVQNSSLSVNDTMTLNRRHNASLEAKHEAGTVCPTVTHTIASQVSRNQELKTGTSISGSHLNSTEAFTLDSLKAVEVVNLSVSCTATCLPFSSVPKETPARAGLSSKQNPAPITHQPLGSFGVVSTYSSKLEEEVSERMFSFYQAKEKFKKELKIEGFLYSDLSVLASDIPYFPPEEEEENLEDGIHLVVCVHGLDGNSADLRLVKTFIELGLPGGKLDFLMSEKNQTDTFADFDTMTDRLLDEIIQHIQLYNLSISRISFIGHSLGNIIIRSVLTRPRFRYYLNKLHTFLSLSGPHLGTLYNNSTLVSTGLWLMQKLKKSGSLLQLTFRDNADLRKCFLYQLSQKTGLQYFKNVVLVASPQDRYVPFHSARIEMCKTALKDRHTGPVYAEMINNLLGPLVEAKDCTLIRHNVFHALPNTANTLIGRAAHIAVLDSELFLEKFFLVAGLNYFK.

Disordered regions lie at residues 445 to 483 (EKNL…EVQE), 514 to 548 (EDEC…GQTP), 648 to 669 (REAL…DLSA), and 718 to 740 (RHAH…LPSG). Positions 649 to 661 (EALDTKPSQPDHA) are enriched in basic and acidic residues. The segment covering 731–740 (TESNTSLPSG) has biased composition (polar residues). 2 positions are modified to phosphoserine: Ser775 and Ser776. Residues 790-819 (TAGFSEDLDPSSKENSPPRHTSLSYGGSRV) form a disordered region. Polar residues predominate over residues 802 to 814 (KENSPPRHTSLSY).

Belongs to the FAM135 family.

The sequence is that of Protein FAM135B (Fam135b) from Mus musculus (Mouse).